Consider the following 100-residue polypeptide: Insertion element IS600 uncharacterized 11 kDa protein (100 aa).

The protein belongs to the transposase 8 family.

The sequence is that of Insertion element IS600 uncharacterized 11 kDa protein from Shigella sonnei.